The chain runs to 276 residues: Acetyl-coenzyme A carboxylase carboxyl transferase subunit beta (276 aa).

A CoA carboxyltransferase N-terminal domain is found at Leu24–Lys276. Cys28, Cys31, Cys46, and Cys49 together coordinate Zn(2+). The C4-type zinc finger occupies Cys28–Cys49.

Belongs to the AccD/PCCB family. Acetyl-CoA carboxylase is a heterohexamer composed of biotin carboxyl carrier protein (AccB), biotin carboxylase (AccC) and two subunits each of ACCase subunit alpha (AccA) and ACCase subunit beta (AccD). Zn(2+) serves as cofactor.

It is found in the cytoplasm. It carries out the reaction N(6)-carboxybiotinyl-L-lysyl-[protein] + acetyl-CoA = N(6)-biotinyl-L-lysyl-[protein] + malonyl-CoA. It participates in lipid metabolism; malonyl-CoA biosynthesis; malonyl-CoA from acetyl-CoA: step 1/1. Component of the acetyl coenzyme A carboxylase (ACC) complex. Biotin carboxylase (BC) catalyzes the carboxylation of biotin on its carrier protein (BCCP) and then the CO(2) group is transferred by the transcarboxylase to acetyl-CoA to form malonyl-CoA. This is Acetyl-coenzyme A carboxylase carboxyl transferase subunit beta from Pediococcus pentosaceus (strain ATCC 25745 / CCUG 21536 / LMG 10740 / 183-1w).